The primary structure comprises 556 residues: Phenylalanine--tRNA ligase beta subunit (556 aa).

The B5 domain maps to Leu278–Pro353. Mg(2+) is bound by residues Asp331, Asp337, Glu340, and Asp341.

It belongs to the phenylalanyl-tRNA synthetase beta subunit family. Type 2 subfamily. As to quaternary structure, tetramer of two alpha and two beta subunits. Mg(2+) serves as cofactor.

The protein resides in the cytoplasm. It carries out the reaction tRNA(Phe) + L-phenylalanine + ATP = L-phenylalanyl-tRNA(Phe) + AMP + diphosphate + H(+). The polypeptide is Phenylalanine--tRNA ligase beta subunit (Pyrococcus abyssi (strain GE5 / Orsay)).